A 138-amino-acid polypeptide reads, in one-letter code: Holo-[acyl-carrier-protein] synthase (138 aa).

Residues Asp-8 and Glu-60 each contribute to the Mg(2+) site.

Belongs to the P-Pant transferase superfamily. AcpS family. The cofactor is Mg(2+).

It is found in the cytoplasm. The enzyme catalyses apo-[ACP] + CoA = holo-[ACP] + adenosine 3',5'-bisphosphate + H(+). Its function is as follows. Transfers the 4'-phosphopantetheine moiety from coenzyme A to a Ser of acyl-carrier-protein. This is Holo-[acyl-carrier-protein] synthase from Magnetococcus marinus (strain ATCC BAA-1437 / JCM 17883 / MC-1).